A 197-amino-acid chain; its full sequence is 7-methyl-GTP pyrophosphatase (197 aa).

The Proton acceptor role is filled by Asp-69.

Belongs to the Maf family. YceF subfamily. The cofactor is a divalent metal cation.

The protein localises to the cytoplasm. The enzyme catalyses N(7)-methyl-GTP + H2O = N(7)-methyl-GMP + diphosphate + H(+). Its function is as follows. Nucleoside triphosphate pyrophosphatase that hydrolyzes 7-methyl-GTP (m(7)GTP). May have a dual role in cell division arrest and in preventing the incorporation of modified nucleotides into cellular nucleic acids. The chain is 7-methyl-GTP pyrophosphatase from Syntrophotalea carbinolica (strain DSM 2380 / NBRC 103641 / GraBd1) (Pelobacter carbinolicus).